The chain runs to 387 residues: Xylose operon regulatory protein (387 aa).

Positions 288–386 (IQAMHYIRHR…EMTPKEFRLN (99 aa)) constitute an HTH araC/xylS-type domain. 2 DNA-binding regions (H-T-H motif) span residues 305–326 (GQVL…KNEM) and 353–376 (IKEI…KKEF).

Functionally, regulatory protein for the xylBAFGHR operon. The protein is Xylose operon regulatory protein (xylR) of Haemophilus influenzae (strain ATCC 51907 / DSM 11121 / KW20 / Rd).